The chain runs to 440 residues: Glutamyl-tRNA reductase (440 aa).

Residues 50-53, Ser-109, 114-116, and Gln-120 contribute to the substrate site; these read TCNR and EPQ. Residue Cys-51 is the Nucleophile of the active site. Residue 189-194 participates in NADP(+) binding; sequence GAGEMA.

It belongs to the glutamyl-tRNA reductase family. As to quaternary structure, homodimer.

It catalyses the reaction (S)-4-amino-5-oxopentanoate + tRNA(Glu) + NADP(+) = L-glutamyl-tRNA(Glu) + NADPH + H(+). It participates in porphyrin-containing compound metabolism; protoporphyrin-IX biosynthesis; 5-aminolevulinate from L-glutamyl-tRNA(Glu): step 1/2. Functionally, catalyzes the NADPH-dependent reduction of glutamyl-tRNA(Glu) to glutamate 1-semialdehyde (GSA). In Nitratidesulfovibrio vulgaris (strain ATCC 29579 / DSM 644 / CCUG 34227 / NCIMB 8303 / VKM B-1760 / Hildenborough) (Desulfovibrio vulgaris), this protein is Glutamyl-tRNA reductase.